Here is a 352-residue protein sequence, read N- to C-terminus: Glucose-6-phosphatase catalytic subunit 1 (352 aa).

Residues 1 to 27 (MDLLHSWGVELAVYLQTRYGKYEGLFD) are Lumenal-facing. The chain crosses the membrane as a helical span at residues 28-48 (LASTVADLHTTFFWLFPIWFH). The Cytoplasmic portion of the chain corresponds to 49–56 (LRRDTALR). The helical transmembrane segment at 57 to 77 (LIWVAVIGDWLNLVLKWVLFG) threads the bilayer. Over 78–113 (ERPYWWVHETKFYGAGPAPSLQQFPITCETGPGSPS) the chain is Lumenal. Arginine 79 lines the substrate pocket. The helical transmembrane segment at 114–134 (GHAMGAAGVWYVMVTALLSIA) threads the bilayer. Catalysis depends on histidine 115, which acts as the Proton donor. Topologically, residues 135–141 (REKQCPP) are cytoplasmic. Residues 142–162 (LLYRFLYIGLWMLMGLVELVV) traverse the membrane as a helical segment. At 163-166 (CISR) the chain is on the lumenal side. Position 166 (arginine 166) interacts with substrate. A helical transmembrane segment spans residues 167–187 (VYMAAHFPHQVIAGIITGTLV). The active-site Nucleophile is histidine 172. Residues 188-205 (AEVVSKEKWIYSASLKKY) lie on the Cytoplasmic side of the membrane. Residues 206 to 226 (FLITLFLTSFAVGFYVLLKAL) traverse the membrane as a helical segment. The Lumenal portion of the chain corresponds to 227 to 256 (DVDLLWTMEKAQKWCIRPEWVHLDSAPFAS). The helical transmembrane segment at 257 to 276 (LLRNMGSLFGLGLGLHSPFY) threads the bilayer. The Cytoplasmic segment spans residues 277-289 (KTTKMRIMSAPLR). Residues 290-310 (IGCIVISVSLLHLLDGWTFSP) traverse the membrane as a helical segment. The Lumenal segment spans residues 311 to 324 (ENHMTFYALSFGKS). The chain crosses the membrane as a helical span at residues 325–345 (AVALLIPTTLVPWALSKIYPV). The Cytoplasmic segment spans residues 346–352 (KTEGKNL). The Prevents secretion from ER signature appears at 349–352 (GKNL).

This sequence belongs to the glucose-6-phosphatase family.

It is found in the endoplasmic reticulum membrane. It catalyses the reaction D-glucose 6-phosphate + H2O = D-glucose + phosphate. The protein operates within carbohydrate biosynthesis; gluconeogenesis. In terms of biological role, hydrolyzes glucose-6-phosphate to glucose in the endoplasmic reticulum. Forms with the glucose-6-phosphate transporter (SLC37A4/G6PT) the complex responsible for glucose production in the terminal step of glycogenolysis and gluconeogenesis. Hence, it is the key enzyme in homeostatic regulation of blood glucose levels. This Haplochromis nubilus (Blue Victoria mouthbrooder) protein is Glucose-6-phosphatase catalytic subunit 1 (g6pc1).